A 222-amino-acid polypeptide reads, in one-letter code: Interleukin-12 subunit alpha (222 aa).

A signal peptide spans 1–25; sequence MCPPRGLLLVTILVLLSHLDHLTWA. 3 cysteine pairs are disulfide-bonded: Cys-40–Cys-113, Cys-67–Cys-199, and Cys-88–Cys-126. N-linked (GlcNAc...) asparagine glycans are attached at residues Asn-42, Asn-96, and Asn-110.

The protein belongs to the IL-6 superfamily. In terms of assembly, heterodimer with IL12B; disulfide-linked. This heterodimer is known as interleukin IL-12. Heterodimer with EBI3/IL27B; not disulfide-linked. This heterodimer is known as interleukin IL-35. Interacts with NBR1; this interaction promotes IL-12 secretion.

The protein localises to the secreted. Functionally, heterodimerizes with IL12B to form the IL-12 cytokine or with EBI3/IL27B to form the IL-35 cytokine. IL-12 is primarily produced by professional antigen-presenting cells (APCs) such as B-cells and dendritic cells (DCs) as well as macrophages and granulocytes and regulates T-cell and natural killer-cell responses, induces the production of interferon-gamma (IFN-gamma), favors the differentiation of T-helper 1 (Th1) cells and is an important link between innate resistance and adaptive immunity. Mechanistically, exerts its biological effects through a receptor composed of IL12R1 and IL12R2 subunits. Binding to the receptor results in the rapid tyrosine phosphorylation of a number of cellular substrates including the JAK family kinases TYK2 and JAK2. In turn, recruited STAT4 gets phosphorylated and translocates to the nucleus where it regulates cytokine/growth factor responsive genes. As part of IL-35, plays essential roles in maintaining the immune homeostasis of the liver microenvironment and also functions as an immune-suppressive cytokine. Mediates biological events through unconventional receptors composed of IL12RB2 and gp130/IL6ST heterodimers or homodimers. Signaling requires the transcription factors STAT1 and STAT4, which form a unique heterodimer that binds to distinct DNA sites. The chain is Interleukin-12 subunit alpha (IL12A) from Canis lupus familiaris (Dog).